We begin with the raw amino-acid sequence, 159 residues long: Ribosomal RNA large subunit methyltransferase H (159 aa).

S-adenosyl-L-methionine contacts are provided by residues L76, G108, and 127–132; that span reads FGLLTL.

The protein belongs to the RNA methyltransferase RlmH family. Homodimer.

The protein resides in the cytoplasm. The catalysed reaction is pseudouridine(1915) in 23S rRNA + S-adenosyl-L-methionine = N(3)-methylpseudouridine(1915) in 23S rRNA + S-adenosyl-L-homocysteine + H(+). Its function is as follows. Specifically methylates the pseudouridine at position 1915 (m3Psi1915) in 23S rRNA. The chain is Ribosomal RNA large subunit methyltransferase H from Streptococcus agalactiae serotype Ia (strain ATCC 27591 / A909 / CDC SS700).